A 163-amino-acid chain; its full sequence is Neurotrophin-3 (163 aa).

The signal sequence occupies residues 1 to 3; that stretch reads IQS. The propeptide occupies 4–119; sequence TSMDQGILTE…VLNRTSRRKR (116 aa). Asn112 carries N-linked (GlcNAc...) asparagine glycosylation. Positions 113–133 are disordered; it reads RTSRRKREGKSHRGEYSVCDS. The span at 123–133 shows a compositional bias: basic and acidic residues; it reads SHRGEYSVCDS.

Belongs to the NGF-beta family.

Its subcellular location is the secreted. In terms of biological role, seems to promote the survival of visceral and proprioceptive sensory neurons. This chain is Neurotrophin-3 (NTF3), found in Charina bottae (Northern rubber boa).